The following is a 332-amino-acid chain: 5-formaminoimidazole-4-carboxamide-1-(beta)-D-ribofuranosyl 5'-monophosphate synthetase (332 aa).

Residues histidine 9 and serine 72 each contribute to the 5-amino-1-(5-phospho-beta-D-ribosyl)imidazole-4-carboxamide site. The ATP-grasp domain maps to 93–323; that stretch reads RNLFPWESNQ…IGREINLAIQ (231 aa). ATP-binding positions include 123-183 and glutamate 205; that span reads PEDV…IPMY. Asparagine 229 is a 5-amino-1-(5-phospho-beta-D-ribosyl)imidazole-4-carboxamide binding site. Residues glutamate 268 and glutamate 281 each contribute to the Mg(2+) site.

It belongs to the phosphohexose mutase family. Mg(2+) is required as a cofactor. Requires Mn(2+) as cofactor.

The catalysed reaction is 5-amino-1-(5-phospho-beta-D-ribosyl)imidazole-4-carboxamide + formate + ATP = 5-formamido-1-(5-phospho-D-ribosyl)imidazole-4-carboxamide + ADP + phosphate. It participates in purine metabolism; IMP biosynthesis via de novo pathway; 5-formamido-1-(5-phospho-D-ribosyl)imidazole-4-carboxamide from 5-amino-1-(5-phospho-D-ribosyl)imidazole-4-carboxamide (formate route): step 1/1. Its function is as follows. Catalyzes the ATP- and formate-dependent formylation of 5-aminoimidazole-4-carboxamide-1-beta-d-ribofuranosyl 5'-monophosphate (AICAR) to 5-formaminoimidazole-4-carboxamide-1-beta-d-ribofuranosyl 5'-monophosphate (FAICAR) in the absence of folates. The polypeptide is 5-formaminoimidazole-4-carboxamide-1-(beta)-D-ribofuranosyl 5'-monophosphate synthetase (Metallosphaera sedula (strain ATCC 51363 / DSM 5348 / JCM 9185 / NBRC 15509 / TH2)).